A 103-amino-acid polypeptide reads, in one-letter code: MIGKEVTVQDIILELSEVQPEVLPVDLFCEEELPNEQETEEEPDNERISYKVIAPCGCRNCEVKLRIFVHATEFGIRAFQQLLTGDLQLLCPDCRGNCKHDGS.

Positions 1-48 (MIGKEVTVQDIILELSEVQPEVLPVDLFCEEELPNEQETEEEPDNERI) are E7 terminal domain. Residues 27-31 (LFCEE) carry the LXCXE motif; interaction with host RB1 and TMEM173/STING motif. The segment at 56–94 (CGCRNCEVKLRIFVHATEFGIRAFQQLLTGDLQLLCPDC) is a zinc-finger region. The short motif at 76-84 (IRAFQQLLT) is the Nuclear export signal element.

The protein belongs to the papillomaviridae E7 protein family. Homodimer. Homooligomer. Interacts with host RB1; this interaction induces dissociation of RB1-E2F1 complex thereby disrupting RB1 activity. Interacts with host EP300; this interaction represses EP300 transcriptional activity. Interacts with protein E2; this interaction inhibits E7 oncogenic activity. Interacts with host TMEM173/STING; this interaction impairs the ability of TMEM173/STING to sense cytosolic DNA and promote the production of type I interferon (IFN-alpha and IFN-beta). Post-translationally, highly phosphorylated.

Its subcellular location is the host cytoplasm. The protein resides in the host nucleus. Plays a role in viral genome replication by driving entry of quiescent cells into the cell cycle. Stimulation of progression from G1 to S phase allows the virus to efficiently use the cellular DNA replicating machinery to achieve viral genome replication. E7 protein has both transforming and trans-activating activities. Induces the disassembly of the E2F1 transcription factor from RB1, with subsequent transcriptional activation of E2F1-regulated S-phase genes. Interferes with host histone deacetylation mediated by HDAC1 and HDAC2, leading to transcription activation. Also plays a role in the inhibition of both antiviral and antiproliferative functions of host interferon alpha. Interaction with host TMEM173/STING impairs the ability of TMEM173/STING to sense cytosolic DNA and promote the production of type I interferon (IFN-alpha and IFN-beta). This Human papillomavirus 5 protein is Protein E7.